Here is a 241-residue protein sequence, read N- to C-terminus: Co-chaperone protein p23-1 (241 aa).

Residues 2 to 91 (SRHPEVKWAE…AEPERWNKLL (90 aa)) enclose the CS domain. 17 MGG repeats span residues 129–131 (MGG), 132–134 (MGG), 135–137 (MGG), 138–140 (MGG), 141–143 (MGG), 144–146 (MGG), 147–149 (MGG), 150–152 (MGG), 162–164 (MGG), 165–167 (MGG), 168–170 (MGG), 171–173 (MGG), 180–182 (MGG), 183–185 (MGG), 186–188 (MGG), 189–191 (MGG), and 192–194 (MGG). The 17 X 3 AA repeats of M-G-G stretch occupies residues 129-194 (MGGMGGMGGM…GMGGMGGMGG (66 aa)). The disordered stretch occupies residues 188–241 (GMGGMGGMEEFEDSDDEEETAKSGDKKDDAVKEEGLATEKAPAAEETTSVKEDK). Acidic residues predominate over residues 196–206 (EEFEDSDDEEE). A compositionally biased stretch (basic and acidic residues) spans 207–224 (TAKSGDKKDDAVKEEGLA). A compositionally biased stretch (low complexity) spans 225–234 (TEKAPAAEET).

Belongs to the p23/wos2 family. As to quaternary structure, interacts with HSP90 in an ATP-dependent manner. Interacts with HSP90-5, HSP90-6 and HSP90-7. As to expression, widely expressed but preferentially in the root meristem.

It is found in the cytoplasm. It localises to the nucleus. Functionally, acts as a co-chaperone for HSP90. Controls root development through the modulation of auxin distribution in the root meristem. The polypeptide is Co-chaperone protein p23-1 (Arabidopsis thaliana (Mouse-ear cress)).